The chain runs to 556 residues: Adenine deaminase (556 aa).

The protein belongs to the metallo-dependent hydrolases superfamily. Adenine deaminase family. Mn(2+) is required as a cofactor.

The catalysed reaction is adenine + H2O + H(+) = hypoxanthine + NH4(+). This chain is Adenine deaminase, found in Methanocaldococcus jannaschii (strain ATCC 43067 / DSM 2661 / JAL-1 / JCM 10045 / NBRC 100440) (Methanococcus jannaschii).